The following is a 303-amino-acid chain: Pantothenate synthetase (303 aa).

Residues 1-21 are disordered; that stretch reads MIATGHGGAERRTTAGDGTAR. ATP is bound at residue 48 to 55; that stretch reads MGALHDGH. His55 acts as the Proton donor in catalysis. Residue Gln79 participates in (R)-pantoate binding. Residue Gln79 coordinates beta-alanine. ATP is bound at residue 165–168; that stretch reads GRKD. Position 171 (Gln171) interacts with (R)-pantoate. 202–205 is a binding site for ATP; that stretch reads ASSR.

Belongs to the pantothenate synthetase family. In terms of assembly, homodimer.

The protein resides in the cytoplasm. The enzyme catalyses (R)-pantoate + beta-alanine + ATP = (R)-pantothenate + AMP + diphosphate + H(+). Its pathway is cofactor biosynthesis; (R)-pantothenate biosynthesis; (R)-pantothenate from (R)-pantoate and beta-alanine: step 1/1. Its function is as follows. Catalyzes the condensation of pantoate with beta-alanine in an ATP-dependent reaction via a pantoyl-adenylate intermediate. The protein is Pantothenate synthetase of Acidothermus cellulolyticus (strain ATCC 43068 / DSM 8971 / 11B).